Reading from the N-terminus, the 148-residue chain is Lysozyme C (148 aa).

An N-terminal signal peptide occupies residues Met-1–Gly-18. One can recognise a C-type lysozyme domain in the interval Lys-19 to Val-148. 4 disulfide bridges follow: Cys-24/Cys-146, Cys-48/Cys-134, Cys-83/Cys-99, and Cys-95/Cys-113. Residues Glu-53 and Asp-71 contribute to the active site.

It belongs to the glycosyl hydrolase 22 family. In terms of assembly, monomer.

Its subcellular location is the secreted. The enzyme catalyses Hydrolysis of (1-&gt;4)-beta-linkages between N-acetylmuramic acid and N-acetyl-D-glucosamine residues in a peptidoglycan and between N-acetyl-D-glucosamine residues in chitodextrins.. In terms of biological role, lysozymes have primarily a bacteriolytic function; those in tissues and body fluids are associated with the monocyte-macrophage system and enhance the activity of immunoagents. This is Lysozyme C (LYZ) from Homo sapiens (Human).